The chain runs to 474 residues: MAYIQLEPLNEGFLSRISGLLLCRWTCRHCCQKCYESSCCQSSEDEVEILGPFPAQTPPWLMASRSSDKDGDSVHTASEVPLTPRTNSPDGRRSSSDTSKSTYSLTRRISSLESRRPSSPLIDIKPIEFGVLSAKKEPIQPSVLRRTYNPDDYFRKFEPHLYSLDSNSDDVDSLTDEEILSKYQLGMLHFSTQYDLLHNHLTVRVIEARDLPPPISHDGSRQDMAHSNPYVKICLLPDQKNSKQTGVKRKTQKPVFEERYTFEIPFLEAQRRTLLLTVVDFDKFSRHCVIGKVSVPLCEVDLVKGGHWWKALIPSSQNEVELGELLLSLNYLPSAGRLNVDVIRAKQLLQTDVSQGSDPFVKIQLVHGLKLVKTKKTSFLRGTIDPFYNESFSFKVPQEELENASLVFTVFGHNMKSSNDFIGRIVIGQYSSGPSETNHWRRMLNTHRTAVEQWHSLRSRAECDRVSPASLEVT.

The tract at residues 60-112 (WLMASRSSDKDGDSVHTASEVPLTPRTNSPDGRRSSSDTSKSTYSLTRRISSL) is disordered. Positions 96 to 112 (SDTSKSTYSLTRRISSL) are enriched in low complexity. 2 positions are modified to phosphoserine: S118 and S119. 2 C2 domains span residues 184–310 (QLGM…HWWK) and 321–455 (ELGE…EQWH).

This sequence belongs to the synaptotagmin family. As to expression, expressed abundantly in brain (frontal and temporal lobes, hippocampus, hypothalamus, amygdala, substantia nigra, and pituitary), kidney, and prostate. Expressed in fetal brain, kidney and lung. Expressed in melanocytes.

Its subcellular location is the membrane. Functionally, plays a role in dendrite formation by melanocytes. In Homo sapiens (Human), this protein is Synaptotagmin-17 (SYT17).